The sequence spans 151 residues: Ubiquitin-conjugating enzyme E2 2 (151 aa).

The UBC core domain maps to 4–150 (AARRRLMRDF…VRETVEKSWE (147 aa)). C88 acts as the Glycyl thioester intermediate in catalysis.

This sequence belongs to the ubiquitin-conjugating enzyme family.

Its subcellular location is the cytoplasm. It is found in the nucleus. It catalyses the reaction S-ubiquitinyl-[E1 ubiquitin-activating enzyme]-L-cysteine + [E2 ubiquitin-conjugating enzyme]-L-cysteine = [E1 ubiquitin-activating enzyme]-L-cysteine + S-ubiquitinyl-[E2 ubiquitin-conjugating enzyme]-L-cysteine.. It functions in the pathway protein modification; protein ubiquitination. In terms of biological role, catalyzes the covalent attachment of ubiquitin to other proteins. Plays a role in transcription regulation by catalyzing the monoubiquitination of histone H2B to form H2BK123ub1. H2BK123ub1 gives a specific tag for epigenetic transcriptional activation and is also a prerequisite for H3K4me and H3K79me formation. Also involved in postreplication repair of UV-damaged DNA, in N-end rule-dependent protein degradation and in sporulation. The chain is Ubiquitin-conjugating enzyme E2 2 (mus-8) from Neurospora crassa (strain ATCC 24698 / 74-OR23-1A / CBS 708.71 / DSM 1257 / FGSC 987).